The sequence spans 327 residues: MPFEIPFLVPILIVILLLVFFSLVPVGLWVTAQFSGVHVKISQLIGMRLRRVIPKNIINPLIKATKAGLNLTTNQLEAHYLAGGNVNTLVNALIAAQRADIELEFERAAAIDLAGRNVLEAVQVSVNPKVIETPNIAAVAMNGIEVIVKAKVTVRANIERLIGGAGEETIIARVGEGIVTTVGSSESHTSVLENPDSISKTVLNKGLDSGTAFEILSIDIADVDVGRNIGAKLQTDQAEADKRIAQAKAEERRAMAVAKEQEMIAEVRSMRAKVVESESKVPLAIAKALESGNLGVLDYYNMKNIISDTEMRQAISGNSEKIKEDDK.

The chain crosses the membrane as a helical span at residues Phe-7–Gly-27.

It belongs to the flotillin-like FloA family. In terms of assembly, homooligomerizes.

The protein resides in the cell membrane. It is found in the membrane raft. In terms of biological role, found in functional membrane microdomains (FMM) that may be equivalent to eukaryotic membrane rafts. FMMs are highly dynamic and increase in number as cells age. Flotillins are thought to be important factors in membrane fluidity. This chain is Flotillin-like protein FloA, found in Finegoldia magna (strain ATCC 29328 / DSM 20472 / WAL 2508) (Peptostreptococcus magnus).